We begin with the raw amino-acid sequence, 208 residues long: A-type ATP synthase subunit E (208 aa).

The protein belongs to the V-ATPase E subunit family. In terms of assembly, has multiple subunits with at least A(3), B(3), C, D, E, F, H, I and proteolipid K(x).

The protein localises to the cell membrane. Functionally, component of the A-type ATP synthase that produces ATP from ADP in the presence of a proton gradient across the membrane. This Ignicoccus hospitalis (strain KIN4/I / DSM 18386 / JCM 14125) protein is A-type ATP synthase subunit E.